Here is a 527-residue protein sequence, read N- to C-terminus: Protein IQ-DOMAIN 4 (527 aa).

The tract at residues 13–90 (CLSPGKDKKN…PPSPPPPPPA (78 aa)) is disordered. A compositionally biased stretch (basic and acidic residues) spans 17-26 (GKDKKNQKPE). Residues 63-90 (PYPPPPPLPDFAPQPLLPPPSPPPPPPA) are compositionally biased toward pro residues. The region spanning 147-175 (EETAAIKIQNAYRCYTARRTLRALRGMAR) is the IQ domain. Residues 256-273 (RSVNRKEASVRRERALAY) are calmodulin-binding. The interval 323–527 (VSVKSSLKRE…EKKRRNGGSS (205 aa)) is disordered. Polar residues predominate over residues 335-360 (IKSSPARSKTQKSASQSSIQWPVNND). Over residues 361–370 (TKSRKIEVTN) the composition is skewed to basic and acidic residues. Composition is skewed to polar residues over residues 399 to 422 (LDNTQTVKSKVSVETTSNVSNAQT) and 437 to 455 (NTKTLKSKSSVGTTGNLAN). A compositionally biased stretch (basic and acidic residues) spans 471–481 (PKKEVVADKKK). A Nuclear localization signal motif is present at residues 478-485 (DKKKPPQM).

It belongs to the IQD family. Binds to multiple calmodulin (CaM) in the presence of Ca(2+) and CaM-like proteins.

The protein localises to the nucleus. It localises to the nucleolus. Its function is as follows. May be involved in cooperative interactions with calmodulins or calmodulin-like proteins. Recruits calmodulin proteins to microtubules, thus being a potential scaffold in cellular signaling and trafficking. May associate with nucleic acids and regulate gene expression at the transcriptional or post-transcriptional level. The polypeptide is Protein IQ-DOMAIN 4 (Arabidopsis thaliana (Mouse-ear cress)).